Consider the following 1412-residue polypeptide: MKALLDLFKQVQQPEVFDAIKIGLASPDKIRSWSFGEVKKPETINYRTFKPERDGLFCAKIFGPIKDYECLCGKYKRLKHRGVICEKCGVEVTLAKVRRERMGHIELASPVAHIWFLKSLPSRLGMVLDMTLRDIERVLYFEAYVVIDPGMTPLKARQIMTEEDYYNKVEEYGDEFRAEMGAEGVRELLRAINIDEQVEMLRTELKNTGSEAKIKKYAKRLKVLEAFQRSGIKPDWMVLEVLPVLPPELRPLVPLDGGRFATSDLNDLYRRVINRNNRLKRLLELKAPEIIVRNEKRMLQEAVDSLLDNGRRGKAMTGANKRPLKSLADMIKGKGGRFRQNLLGKRVDYSGRSVIVVGPTLKLHQCGLPKLMALELFKPFIFNKLEVMGVATTIKAAKKEVENQTPVVWDILEEVIREHPVMLNRAPTLHRLGIQAFEPVLIEGKAIQLHPLVCAAFNADFDGDQMAVHVPLSLEAQMEARTLMLASNNVLFPANGDPSIVPSQDIVLGLYYATREAVNAKGEGLTFTGVSEALRAYENKEVELASRVNVRITEMVHNEDKSEGAPAFVPKITLYPTTVGRAILSEILPPGLPFSVLNKPLKKKEISRLINTAFRKCGLRETVIFADQLMQSGFRLATRAGISICVDDMLVPPQKETIVGDAAKKVKEYDRQYMSGLVTSQERYNNVVDIWSATSEAVGKAMMEQLSTEPVTDRDGNETRQESFNSIYMMADSGARGSAVQIRQLAGMRGLMAKPDGSIIETPITANFREGLNVLQYFISTHGARKGLADTALKTANSGYLTRRLVDVTQDLVVVEDDCGTSNGVAMKALVEGGEVVEALRDRILGRVTVADVVNPESQETLYETGTLLDEDAVEEIERLGIDEVRVRTPLTCETRYGLCAACYGRDLGRGSSVNVGEAVGVIAAQSIGEPGTQLTMRTFHIGGAASRAAVASSVEAKSNGTVRFTATMRYVTNAKGEQIVISRSGEAMITDDHGRERERHKVPYGATLLQLDGAQIKAGTQLATWDPMTRPIITEWGGTVKFENVEEGVTVAKQIDDVTGLSTLVVIDVKRRGSQASKTVRPQVKLLDANGEEVKIPNTEHSVQIGFQVGALITVKDGQQVQVGEVLARIPVESQKTRDITGGLPRVAELFEARSPKDAGILAEVTGTTSFGKDTKGKQRLVITDLDGNQHEFLIAKEKQVLVHDGQVVNKGEMIVDGPADPHDILRLQGIEALSRYIVDEVQDVYRLQGVKINDKHIEVIVRQMLRRVQITDNGDTRFIPGEQVERSDMLDENDRMIAEDKRPATYENVLLGITKASLSTDSFISAASFQETTRVLTEAAIMGKRDDLRGLKENVIVGRLIPAGTGLAFHKARKSKELSDRERFDQIAAEESFEFGTPETPAAEQQHSGE.

Residues Cys-70, Cys-72, Cys-85, and Cys-88 each coordinate Zn(2+). Positions 460, 462, and 464 each coordinate Mg(2+). Positions 819, 893, 900, and 903 each coordinate Zn(2+). A disordered region spans residues 1391 to 1412 (AEESFEFGTPETPAAEQQHSGE).

The protein belongs to the RNA polymerase beta' chain family. As to quaternary structure, the RNAP catalytic core consists of 2 alpha, 1 beta, 1 beta' and 1 omega subunit. When a sigma factor is associated with the core the holoenzyme is formed, which can initiate transcription. Requires Mg(2+) as cofactor. Zn(2+) is required as a cofactor.

It carries out the reaction RNA(n) + a ribonucleoside 5'-triphosphate = RNA(n+1) + diphosphate. DNA-dependent RNA polymerase catalyzes the transcription of DNA into RNA using the four ribonucleoside triphosphates as substrates. The polypeptide is DNA-directed RNA polymerase subunit beta' (Paraburkholderia phytofirmans (strain DSM 17436 / LMG 22146 / PsJN) (Burkholderia phytofirmans)).